Reading from the N-terminus, the 336-residue chain is Plant-specific TFIIB-related protein 2 (336 aa).

The TFIIB-type zinc finger occupies 2-34 (EEETCLDCKRPTIMVVDHSSGDTICSECGLVLE). Zn(2+) contacts are provided by Cys-6, Cys-9, Cys-26, and Cys-29.

Specifically expressed in reproductive organs and seeds.

Its subcellular location is the nucleus. Functionally, plant-specific TFIIB-related protein involved in the regulation of endosperm proliferation during the syncytial phase of endosperm development. Does not contribute to RNA polymerase IV or V activities in reproductive tissues. The chain is Plant-specific TFIIB-related protein 2 from Arabidopsis thaliana (Mouse-ear cress).